The following is a 498-amino-acid chain: Probable global transactivator (498 aa).

Residues 43–206 (RERRGRPHGG…YAIIHFLRCR (164 aa)) enclose the Helicase ATP-binding domain. An ATP-binding site is contributed by 55-63 (ADDMGLGKT). Residues 157–160 (DEAH) carry the DEAH box motif. Residues 337–493 (ELVQRVLDTP…RTALNYEDIK (157 aa)) enclose the Helicase C-terminal domain.

It belongs to the SNF2/RAD54 helicase family.

This Orgyia pseudotsugata (Douglas-fir tussock moth) protein is Probable global transactivator (GTA).